We begin with the raw amino-acid sequence, 101 residues long: MVNTDNKENEPPNMEKAHMDSSNALYRVQRPLQRRPLQELSIELVKPSQTITVKKSKKSTNSSSYFAQLHAASGQNPPPSVHSSHKQPSKARSPNPLLSMR.

A compositionally biased stretch (basic and acidic residues) spans 1–19; it reads MVNTDNKENEPPNMEKAHM. The segment at 1–101 is disordered; that stretch reads MVNTDNKENE…RSPNPLLSMR (101 aa).

Interacts with slp1.

The protein localises to the cytoplasm. The protein resides in the nucleus. In terms of biological role, specifically required for meiosis II (MII). Binds to slp1, an activator of the anapahase promoting complex/cyclcosome (APC/C), and counteracts its function in promoting proteolysis of cdc13. By suppressing the degradation of cdc13 at anaphase I this protein may help maintain a sufficient level of cdc2 kinase activity to complete MII. This is Protein mes1 (mes1) from Schizosaccharomyces pombe (strain 972 / ATCC 24843) (Fission yeast).